Consider the following 208-residue polypeptide: Small ribosomal subunit protein eS8 (208 aa).

The interval 1-40 is disordered; sequence MGISRDNWHKRRKTGGKRKPVHKKRKYELGRPPSNTKLGP. Residues 8–26 are compositionally biased toward basic residues; it reads WHKRRKTGGKRKPVHKKRK.

Belongs to the eukaryotic ribosomal protein eS8 family. As to quaternary structure, component of the small ribosomal subunit.

It localises to the cytoplasm. Component of the small ribosomal subunit. The ribosome is a large ribonucleoprotein complex responsible for the synthesis of proteins in the cell. The chain is Small ribosomal subunit protein eS8 (rps8) from Ictalurus punctatus (Channel catfish).